A 284-amino-acid polypeptide reads, in one-letter code: Formamidopyrimidine-DNA glycosylase (284 aa).

The active-site Schiff-base intermediate with DNA is Pro2. The active-site Proton donor is Glu3. Lys58 serves as the catalytic Proton donor; for beta-elimination activity. Positions 97, 120, and 165 each coordinate DNA. An FPG-type zinc finger spans residues 250–284 (FVYDRAGEPCKVCGTPVRQIVQGQRSTFYCTHCQH). The active-site Proton donor; for delta-elimination activity is the Arg274.

It belongs to the FPG family. As to quaternary structure, monomer. The cofactor is Zn(2+).

The enzyme catalyses Hydrolysis of DNA containing ring-opened 7-methylguanine residues, releasing 2,6-diamino-4-hydroxy-5-(N-methyl)formamidopyrimidine.. It carries out the reaction 2'-deoxyribonucleotide-(2'-deoxyribose 5'-phosphate)-2'-deoxyribonucleotide-DNA = a 3'-end 2'-deoxyribonucleotide-(2,3-dehydro-2,3-deoxyribose 5'-phosphate)-DNA + a 5'-end 5'-phospho-2'-deoxyribonucleoside-DNA + H(+). Functionally, involved in base excision repair of DNA damaged by oxidation or by mutagenic agents. Acts as a DNA glycosylase that recognizes and removes damaged bases. Has a preference for oxidized purines, such as 7,8-dihydro-8-oxoguanine (8-oxoG). Has AP (apurinic/apyrimidinic) lyase activity and introduces nicks in the DNA strand. Cleaves the DNA backbone by beta-delta elimination to generate a single-strand break at the site of the removed base with both 3'- and 5'-phosphates. The sequence is that of Formamidopyrimidine-DNA glycosylase from Cupriavidus pinatubonensis (strain JMP 134 / LMG 1197) (Cupriavidus necator (strain JMP 134)).